A 701-amino-acid chain; its full sequence is Ribosomal RNA large subunit methyltransferase K/L (701 aa).

Residues 43–155 form the THUMP domain; it reads LLYKSLMWSR…NNILHIMLDL (113 aa).

The protein belongs to the methyltransferase superfamily. RlmKL family.

It localises to the cytoplasm. It carries out the reaction guanosine(2445) in 23S rRNA + S-adenosyl-L-methionine = N(2)-methylguanosine(2445) in 23S rRNA + S-adenosyl-L-homocysteine + H(+). It catalyses the reaction guanosine(2069) in 23S rRNA + S-adenosyl-L-methionine = N(2)-methylguanosine(2069) in 23S rRNA + S-adenosyl-L-homocysteine + H(+). Its function is as follows. Specifically methylates the guanine in position 2445 (m2G2445) and the guanine in position 2069 (m7G2069) of 23S rRNA. In Buchnera aphidicola subsp. Acyrthosiphon pisum (strain APS) (Acyrthosiphon pisum symbiotic bacterium), this protein is Ribosomal RNA large subunit methyltransferase K/L.